Reading from the N-terminus, the 262-residue chain is Serine O-acetyltransferase (262 aa).

Cysteine 107 (acyl-thioester intermediate) is an active-site residue. Position 128 (lysine 128) interacts with substrate. The Proton acceptor role is filled by histidine 200. Glutamate 202 is an active-site residue. Residue arginine 214 participates in substrate binding.

This sequence belongs to the MetA family.

The protein resides in the cytoplasm. It catalyses the reaction L-serine + acetyl-CoA = O-acetyl-L-serine + CoA. The catalysed reaction is L-homoserine + acetyl-CoA = O-acetyl-L-homoserine + CoA. Its pathway is amino-acid biosynthesis; L-cysteine biosynthesis; L-cysteine from L-serine: step 1/2. In terms of biological role, transfers an acetyl group from acetyl-CoA to L-serine, forming acetyl-L-serine. In vitro, also has homoserine acetyl transferase activity. This chain is Serine O-acetyltransferase, found in Lactobacillus acidophilus.